The chain runs to 457 residues: Aromatic amino acid transport protein AroP (457 aa).

Topologically, residues 1–20 are cytoplasmic; the sequence is MMDSQQHGEQLKRGLKNRHI. Residues 21–41 form a helical membrane-spanning segment; it reads QLIALGGAIGTGLFLGSASVI. Q42 is a topological domain (periplasmic). A helical transmembrane segment spans residues 43-63; the sequence is SAGPGIILGYAIAGFIAFLIM. Residues 64 to 86 are Cytoplasmic-facing; that stretch reads RQLGEMVVEEPVAGSFSHFAYKY. A helical transmembrane segment spans residues 87 to 107; the sequence is WGGFAGFASGWNYWVLYVLVA. Residues 108 to 117 are Periplasmic-facing; that stretch reads MAELTAVGKY. Residues 118–138 form a helical membrane-spanning segment; that stretch reads IQFWYPEIPTWASAAAFFVII. Over 139-155 the chain is Cytoplasmic; it reads NAINLTNVKVFGEMEFW. The helical transmembrane segment at 156-176 threads the bilayer; that stretch reads FAIIKVIAVIAMILFGAWLLF. Residues 177–201 are Periplasmic-facing; sequence SDTAGPQATVRNLWEQGGFLPHGWT. Residues 202–222 form a helical membrane-spanning segment; the sequence is GLVMMMAIIMFSFGGLELVGI. The Cytoplasmic segment spans residues 223-240; it reads TAAEADNPEQSIPKATNQ. The helical transmembrane segment at 241–261 threads the bilayer; sequence VIYRILIFYIGSLAVLLSLLP. Residues 262 to 271 lie on the Periplasmic side of the membrane; the sequence is WTRVTADTSP. A helical transmembrane segment spans residues 272–292; sequence FVLIFHELGDTFVANALNIVV. At 293–333 the chain is on the cytoplasmic side; it reads LTAALSVYNSCVYCNSRMLFGLAQQGNAPKALLNVDKRGVP. Residues 334-354 form a helical membrane-spanning segment; it reads VSSILVSAVVTALCVLLNYLA. Topologically, residues 355–358 are periplasmic; it reads PESA. Residues 359–379 form a helical membrane-spanning segment; that stretch reads FGLLMALVVSALVINWAMISL. The Cytoplasmic portion of the chain corresponds to 380-400; it reads AHMMFRRAKQQQGVKTRFPAL. Residues 401–421 traverse the membrane as a helical segment; it reads FYPFGNVLCLLFMAAVLIIML. Over 422–425 the chain is Periplasmic; the sequence is MTPG. A helical membrane pass occupies residues 426–446; sequence MAISVWLIPVWLLILGVGYLC. Residues 447 to 457 lie on the Cytoplasmic side of the membrane; that stretch reads KEKTAKTVKAH.

The protein belongs to the amino acid-polyamine-organocation (APC) superfamily. Amino acid transporter (AAT) (TC 2.A.3.1) family.

Its subcellular location is the cell inner membrane. It carries out the reaction L-phenylalanine(in) + H(+)(in) = L-phenylalanine(out) + H(+)(out). The enzyme catalyses L-tryptophan(in) + H(+)(in) = L-tryptophan(out) + H(+)(out). It catalyses the reaction L-tyrosine(in) + H(+)(in) = L-tyrosine(out) + H(+)(out). In terms of biological role, permease that is involved in the active transport across the cytoplasmic membrane of all three aromatic amino acids, phenylalanine, tyrosine and tryptophan. In Salmonella typhi, this protein is Aromatic amino acid transport protein AroP (aroP).